Consider the following 348-residue polypeptide: Rhodopsin (348 aa).

Methionine 1 carries the post-translational modification N-acetylmethionine. Residues 1–36 (MNGTEGPNFYVPFSNKTGVVRSPFEFPQYYLAEPWQ) are Extracellular-facing. 2 N-linked (GlcNAc...) asparagine glycosylation sites follow: asparagine 2 and asparagine 15. The chain crosses the membrane as a helical span at residues 37 to 61 (FSMLAAYMFLLIVLGFPINFLTLYV). Topologically, residues 62-73 (TVQHKKLRTPLN) are cytoplasmic. The helical transmembrane segment at 74-96 (YILLNLAVADLFMVFGGFTTTLY) threads the bilayer. Over 97 to 110 (TSLHGYFVFGPTGC) the chain is Extracellular. A disulfide bond links cysteine 110 and cysteine 187. Residues 111–133 (NLEGFFATLGGEIALWSLVVLAI) traverse the membrane as a helical segment. The short motif at 134–136 (ERY) is the 'Ionic lock' involved in activated form stabilization element. At 134 to 152 (ERYVVVCKPMSNFRFGENH) the chain is on the cytoplasmic side. A helical membrane pass occupies residues 153–173 (AIMGVGFTWVMALACAAPPLV). Residues 174 to 202 (GWSRYIPEGMQCSCGIDYYTLKPEVNNES) are Extracellular-facing. Zn(2+) is bound at residue glutamate 201. The chain crosses the membrane as a helical span at residues 203-224 (FVIYMFVVHFTIPMIVIFFCYG). Residues 225 to 252 (QLVFTVKEAAAQQQESATTQKAEKEVTR) are Cytoplasmic-facing. Residues 253–274 (MVIIMVIAFLICWVPYASVAFY) form a helical membrane-spanning segment. Over 275-286 (IFTHQGSNFGPI) the chain is Extracellular. Glutamine 279 contacts Zn(2+). Residues 287-308 (FMTLPAFFAKAASIYNPVIYIM) form a helical membrane-spanning segment. Lysine 296 bears the N6-(retinylidene)lysine mark. Over 309 to 348 (MNKQFRTCMITTLCCGKNPLGDDEVSASASKTETSQVAPA) the chain is Cytoplasmic. S-palmitoyl cysteine attachment occurs at residues cysteine 322 and cysteine 323. Residues 330-348 (DDEVSASASKTETSQVAPA) form an interaction with SAG region. 2 positions are modified to phosphoserine: serine 334 and serine 338. A phosphothreonine mark is found at threonine 340 and threonine 342. A Phosphoserine modification is found at serine 343.

The protein belongs to the G-protein coupled receptor 1 family. Opsin subfamily. As to quaternary structure, homodimer. May form a complex composed of RHO, GRK1 and RCVRN in a Ca(2+)-dependent manner; RCVRN prevents the interaction between GRK1 and RHO. Interacts with GRK1. Interacts (phosphorylated form) with SAG. Interacts with GNAT1. Interacts with GNAT3. SAG and G-proteins compete for a common binding site. Interacts with PRCD; the interaction promotes PRCD stability. Forms a complex with ASAP1 and ARF4. Forms a complex with ASAP1, RAB11A, Rabin8/RAB3IP, ARF4 and RAB11FIP3; the complex regulates Golgi-to-cilia rhodopsin/RHO transport in photoreceptors. Phosphorylated on some or all of the serine and threonine residues present in the C-terminal region. Post-translationally, contains one covalently linked retinal chromophore. Upon light absorption, the covalently bound 11-cis-retinal is converted to all-trans-retinal. After hydrolysis of the Schiff base and release of the covalently bound all-trans-retinal, active rhodopsin is regenerated by binding of a fresh molecule of 11-cis-retinal.

The protein resides in the membrane. The protein localises to the cell projection. It localises to the cilium. Its subcellular location is the photoreceptor outer segment. Its function is as follows. Photoreceptor required for image-forming vision at low light intensity. Required for photoreceptor cell viability after birth. Light-induced isomerization of 11-cis to all-trans retinal triggers a conformational change that activates signaling via G-proteins. Subsequent receptor phosphorylation mediates displacement of the bound G-protein alpha subunit by the arrestin SAG and terminates signaling. This Phoca vitulina (Harbor seal) protein is Rhodopsin (RHO).